The following is a 506-amino-acid chain: Histidine--tRNA ligase, mitochondrial (506 aa).

Residues 1-33 (MPQLGLLPGRAWTVLLGLLRPPPGALCIRAVRS) constitute a mitochondrion transit peptide. Residue serine 67 is modified to Phosphoserine. Residues 131-133 (DLT), arginine 158, glutamine 174, aspartate 178, arginine 327, and 331-332 (YY) each bind L-histidine. Lysine 444 carries the post-translational modification N6-acetyllysine.

It belongs to the class-II aminoacyl-tRNA synthetase family. In terms of assembly, homodimer.

Its subcellular location is the mitochondrion. The catalysed reaction is tRNA(His) + L-histidine + ATP = L-histidyl-tRNA(His) + AMP + diphosphate + H(+). Mitochondrial aminoacyl-tRNA synthetase that catalyzes the ATP-dependent ligation of histidine to the 3'-end of its cognate tRNA, via the formation of an aminoacyl-adenylate intermediate (His-AMP). The polypeptide is Histidine--tRNA ligase, mitochondrial (HARS2) (Bos taurus (Bovine)).